The sequence spans 373 residues: Partitioning protein REP1 (373 aa).

An interaction with REP2 region spans residues 1 to 76 (MNGERLLACI…EKELDWPDPA (76 aa)). The segment at 1–129 (MNGERLLACI…LNRRGKGIRR (129 aa)) is interaction with REP2 and self-association. Residues 349–373 (FEEHWKPVDVEVEFRCKFKERKVDG) are nuclear localization.

In terms of assembly, interacts with REP2.

It is found in the nucleus. Functionally, part of the plasmid partitioning system, which ensures the equal distribution of replicated plasmid molecules to daughter cells. The plasmids exist as well-organized plasmid foci within the nucleus that stay together throughout the cell-cycle and act as entity during segregation, effetively reducing copy number to one. Plasmid partitioning requires the proteins REP1, REP2, and a cis-acting locus STB (REP3). REP1-REP2 stably associate with CSE4-containing chromatin at STB during S-phase, marking the locus with a centromeric tag, and thereby probably catching mitotic spindle microtubules to the plasmid cluster and coupling plasmid segregation to chromosome segregation. REP1-REP2 are required to recruit the cohesin complex to the STB locus for pairing of the replicated plasmid cluster, a prerequisite for successful plasmid segregation. REP1-REP2 also negatively regulate expression of site-specific recombinase FLP and of RAF1. This chain is Partitioning protein REP1 (REP1), found in Saccharomyces cerevisiae (strain ATCC 204508 / S288c) (Baker's yeast).